The chain runs to 83 residues: Small ribosomal subunit protein bS16 (83 aa).

This sequence belongs to the bacterial ribosomal protein bS16 family.

This is Small ribosomal subunit protein bS16 from Magnetococcus marinus (strain ATCC BAA-1437 / JCM 17883 / MC-1).